Here is an 871-residue protein sequence, read N- to C-terminus: Probable inorganic carbon transporter subunit DabA (871 aa).

Zn(2+) is bound by residues Cys396, Asp398, His577, and Cys592.

This sequence belongs to the inorganic carbon transporter (TC 9.A.2) DabA family. Forms a complex with DabB. It depends on Zn(2+) as a cofactor.

The protein resides in the cell membrane. Functionally, part of an energy-coupled inorganic carbon pump. This Bacillus subtilis (strain 168) protein is Probable inorganic carbon transporter subunit DabA.